Here is a 134-residue protein sequence, read N- to C-terminus: Thionin-2.1 (134 aa).

The first 24 residues, Met1–Ala24, serve as a signal peptide directing secretion. 3 disulfide bridges follow: Cys27/Cys61, Cys28/Cys55, and Cys40/Cys49. Positions Ala68–Leu134 are cleaved as a propeptide — acidic domain.

This sequence belongs to the plant thionin (TC 1.C.44) family. Detected in rosette leaves and at a very high level in flowers and in siliques.

It is found in the secreted. In terms of biological role, seems to function as a defense factor. Thionins are small plant proteins which are toxic to animal cells. They seem to exert their toxic effect at the level of the cell membrane. Their precise function is not known. The chain is Thionin-2.1 (THI2.1) from Arabidopsis thaliana (Mouse-ear cress).